Here is a 278-residue protein sequence, read N- to C-terminus: 4-deoxy-L-threo-5-hexosulose-uronate ketol-isomerase (278 aa).

Zn(2+) is bound by residues His-196, His-198, Glu-203, and His-245.

This sequence belongs to the KduI family. Zn(2+) serves as cofactor.

It catalyses the reaction 5-dehydro-4-deoxy-D-glucuronate = 3-deoxy-D-glycero-2,5-hexodiulosonate. It functions in the pathway glycan metabolism; pectin degradation; 2-dehydro-3-deoxy-D-gluconate from pectin: step 4/5. Catalyzes the isomerization of 5-dehydro-4-deoxy-D-glucuronate to 3-deoxy-D-glycero-2,5-hexodiulosonate. This chain is 4-deoxy-L-threo-5-hexosulose-uronate ketol-isomerase, found in Salmonella dublin (strain CT_02021853).